The primary structure comprises 689 residues: Potassium-transporting ATPase ATP-binding subunit (689 aa).

4 helical membrane passes run 35-55 (VMFV…AILA), 62-82 (AAFT…ANFA), 220-240 (ALTI…ATLF), and 260-280 (VLVA…LSAI). Asp-313 acts as the 4-aspartylphosphate intermediate in catalysis. ATP contacts are provided by residues Asp-350, Glu-354, 383–390 (FSAQTRMS), and Lys-401. Mg(2+) is bound by residues Asp-524 and Asp-528. 3 consecutive transmembrane segments (helical) span residues 594–614 (FAII…LNVM), 622–642 (AIMS…PLAL), and 665–685 (VGGL…LVAL).

This sequence belongs to the cation transport ATPase (P-type) (TC 3.A.3) family. Type IA subfamily. As to quaternary structure, the system is composed of three essential subunits: KdpA, KdpB and KdpC.

It localises to the cell inner membrane. It catalyses the reaction K(+)(out) + ATP + H2O = K(+)(in) + ADP + phosphate + H(+). Its function is as follows. Part of the high-affinity ATP-driven potassium transport (or Kdp) system, which catalyzes the hydrolysis of ATP coupled with the electrogenic transport of potassium into the cytoplasm. This subunit is responsible for energy coupling to the transport system and for the release of the potassium ions to the cytoplasm. In Serratia proteamaculans (strain 568), this protein is Potassium-transporting ATPase ATP-binding subunit.